The following is a 905-amino-acid chain: Protein translocase subunit SecA (905 aa).

ATP-binding positions include glutamine 87, 105-109, and aspartate 509; that span reads GEGKT. Zn(2+) contacts are provided by cysteine 890, cysteine 892, cysteine 901, and histidine 902.

The protein belongs to the SecA family. Monomer and homodimer. Part of the essential Sec protein translocation apparatus which comprises SecA, SecYEG and auxiliary proteins SecDF-YajC and YidC. Zn(2+) is required as a cofactor.

It is found in the cell inner membrane. The protein localises to the cytoplasm. The catalysed reaction is ATP + H2O + cellular proteinSide 1 = ADP + phosphate + cellular proteinSide 2.. Functionally, part of the Sec protein translocase complex. Interacts with the SecYEG preprotein conducting channel. Has a central role in coupling the hydrolysis of ATP to the transfer of proteins into and across the cell membrane, serving both as a receptor for the preprotein-SecB complex and as an ATP-driven molecular motor driving the stepwise translocation of polypeptide chains across the membrane. In Acinetobacter baylyi (strain ATCC 33305 / BD413 / ADP1), this protein is Protein translocase subunit SecA.